The following is a 213-amino-acid chain: Orotate phosphoribosyltransferase (213 aa).

Lysine 26 lines the 5-phospho-alpha-D-ribose 1-diphosphate pocket. 34–35 (FF) contributes to the orotate binding site. 5-phospho-alpha-D-ribose 1-diphosphate contacts are provided by residues 72 to 73 (YK), arginine 99, lysine 100, lysine 103, histidine 105, and 124 to 132 (DDVITAGTA). Orotate-binding residues include threonine 128 and arginine 156.

The protein belongs to the purine/pyrimidine phosphoribosyltransferase family. PyrE subfamily. Homodimer. The cofactor is Mg(2+).

It catalyses the reaction orotidine 5'-phosphate + diphosphate = orotate + 5-phospho-alpha-D-ribose 1-diphosphate. Its pathway is pyrimidine metabolism; UMP biosynthesis via de novo pathway; UMP from orotate: step 1/2. Functionally, catalyzes the transfer of a ribosyl phosphate group from 5-phosphoribose 1-diphosphate to orotate, leading to the formation of orotidine monophosphate (OMP). This is Orotate phosphoribosyltransferase from Salmonella typhi.